The primary structure comprises 358 residues: 3-isopropylmalate dehydrogenase (358 aa).

77-90 (GEKWDSLPRELRPE) lines the NAD(+) pocket. Residues R97, R107, R135, and D220 each coordinate substrate. Mg(2+) contacts are provided by D220, D244, and D248. 277-289 (GSAPDIAGQGIAN) is a binding site for NAD(+).

This sequence belongs to the isocitrate and isopropylmalate dehydrogenases family. LeuB type 1 subfamily. In terms of assembly, homodimer. It depends on Mg(2+) as a cofactor. The cofactor is Mn(2+).

It is found in the cytoplasm. It catalyses the reaction (2R,3S)-3-isopropylmalate + NAD(+) = 4-methyl-2-oxopentanoate + CO2 + NADH. It functions in the pathway amino-acid biosynthesis; L-leucine biosynthesis; L-leucine from 3-methyl-2-oxobutanoate: step 3/4. Catalyzes the oxidation of 3-carboxy-2-hydroxy-4-methylpentanoate (3-isopropylmalate) to 3-carboxy-4-methyl-2-oxopentanoate. The product decarboxylates to 4-methyl-2 oxopentanoate. In Wolinella succinogenes (strain ATCC 29543 / DSM 1740 / CCUG 13145 / JCM 31913 / LMG 7466 / NCTC 11488 / FDC 602W) (Vibrio succinogenes), this protein is 3-isopropylmalate dehydrogenase.